The sequence spans 570 residues: Interleukin-1 receptor accessory protein (570 aa).

The first 20 residues, 1-20 (MTLLWCVVSLYFYGILQSDA), serve as a signal peptide directing secretion. 3 Ig-like C2-type domains span residues 21–128 (SERC…VAFP), 141–230 (PMKL…RTLT), and 242–348 (PPVI…AKVK). At 21–367 (SERCDDWGLD…VELACGFGAT (347 aa)) the chain is on the extracellular side. Disulfide bonds link Cys-24–Cys-122, Cys-47–Cys-114, Cys-137–Cys-181, Cys-160–Cys-212, and Cys-266–Cys-332. N-linked (GlcNAc...) asparagine glycosylation is present at Asn-57. The tract at residues 69-85 (IWYWTRQDRDLEEPINF) is essential for interaction with PTPRD. Asn-107, Asn-111, and Asn-118 each carry an N-linked (GlcNAc...) asparagine glycan. N-linked (GlcNAc...) asparagine glycosylation is found at Asn-196, Asn-209, and Asn-299. A helical membrane pass occupies residues 368-388 (VLLVVILIVVYHVYWLEMVLF). Residues 389–570 (YRAHFGTDET…GLSYSSLKNV (182 aa)) are Cytoplasmic-facing. In terms of domain architecture, TIR spans 403–546 (KEYDIYVSYA…RFWKQLQVAM (144 aa)). Glu-482 is an active-site residue. Residues 549–570 (KKSPRRSSSDEQGLSYSSLKNV) form a disordered region. The residue at position 557 (Ser-557) is a Phosphoserine. The span at 558-570 (DEQGLSYSSLKNV) shows a compositional bias: polar residues.

It belongs to the interleukin-1 receptor family. In terms of assembly, the interleukin-36 receptor complex is a heterodimer of IL1RL2 and IL1RAP; the association is inhibited by IL36RN. The interleukin-1 receptor complex is a heterodimer of IL1R1 and IL1RAP. Associates with IL1R2 to form a non-signaling interleukin-1 receptor complex. Isoform 4 interacts with IL1R1 in an interleukin-1-dependent manner. Interacts with IL-33-bound IL1RL1 to form the minimal interleukin-33 signaling complex with a 1:1:1 stoichiometry. Interacts with KIT (independently of stimulation with KITLG/SCF). A mast cell-specific KITLG/SCF-induced interleukin-33 signaling complex contains IL1RL1, IL1RAP, KIT and MYD88. Interacts (via the first immunoglobilin domain) with PTPRD (via the third immunoglobilin domain); induces pre- and postsynaptic differentiation of neurons. Detected in liver, skin, placenta, thymus and lung. Isoform 4 is predominantly expressed in brain. Overexpressed on candidate chronic myeloid leukemia (CML) stem cells, hematopoietic stem cells and mononuclear cells of patients with acute myeloid leukemia (AML). Overexpressed in patients with chronic obstructive pulmonary disease (COPD). Expressed in T-helper 1 (Th1) and T-helper 2 (Th2) cell subsets.

Its subcellular location is the cell membrane. It localises to the secreted. It carries out the reaction NAD(+) + H2O = ADP-D-ribose + nicotinamide + H(+). In terms of biological role, coreceptor for IL1RL2 in the IL-36 signaling system. Coreceptor with IL1R1 in the IL-1 signaling system. Associates with IL1R1 bound to IL1B to form the high affinity interleukin-1 receptor complex which mediates interleukin-1-dependent activation of NF-kappa-B and other pathways. Signaling involves the recruitment of adapter molecules such as TOLLIP, MYD88, and IRAK1 or IRAK2 via the respective TIR domains of the receptor/coreceptor subunits. Recruits TOLLIP to the signaling complex. Does not bind to interleukin-1 alone; binding of IL1RN to IL1R1, prevents its association with IL1R1 to form a signaling complex. The cellular response is modulated through a non-signaling association with the membrane IL1R2 decoy receptor. Coreceptor for IL1RL1 in the IL-33 signaling system. Can bidirectionally induce pre- and postsynaptic differentiation of neurons by trans-synaptically binding to PTPRD. May play a role in IL1B-mediated costimulation of IFNG production from T-helper 1 (Th1) cells. Associates with secreted ligand-bound IL1R2 and increases the affinity of secreted IL1R2 for IL1B; this complex formation may be the dominant mechanism for neutralization of IL1B by secreted/soluble receptors. Enhances the ability of secreted IL1R1 to inhibit IL-33 signaling. Functionally, unable to mediate canonical IL-1 signaling. Required for Src phosphorylation by IL1B. May be involved in IL1B-potentiated NMDA-induced calcium influx in neurons. The protein is Interleukin-1 receptor accessory protein (IL1RAP) of Homo sapiens (Human).